The following is a 31-amino-acid chain: MSALIGYILLMTLMFSLAAGLYFGLRSIRLI.

Residues 3 to 23 (ALIGYILLMTLMFSLAAGLYF) traverse the membrane as a helical segment.

This sequence belongs to the PetL family. As to quaternary structure, the 4 large subunits of the cytochrome b6-f complex are cytochrome b6, subunit IV (17 kDa polypeptide, PetD), cytochrome f and the Rieske protein, while the 4 small subunits are PetG, PetL, PetM and PetN. The complex functions as a dimer.

The protein localises to the plastid. It is found in the chloroplast thylakoid membrane. Functionally, component of the cytochrome b6-f complex, which mediates electron transfer between photosystem II (PSII) and photosystem I (PSI), cyclic electron flow around PSI, and state transitions. PetL is important for photoautotrophic growth as well as for electron transfer efficiency and stability of the cytochrome b6-f complex. This Emiliania huxleyi (Coccolithophore) protein is Cytochrome b6-f complex subunit 6.